Here is a 340-residue protein sequence, read N- to C-terminus: uncharacterized protein (340 aa).

This is an uncharacterized protein from Methanocaldococcus jannaschii (strain ATCC 43067 / DSM 2661 / JAL-1 / JCM 10045 / NBRC 100440) (Methanococcus jannaschii).